A 247-amino-acid polypeptide reads, in one-letter code: tRNA pseudouridine synthase A (247 aa).

The active-site Nucleophile is Asp52. Tyr113 is a binding site for substrate.

It belongs to the tRNA pseudouridine synthase TruA family. Homodimer.

It catalyses the reaction uridine(38/39/40) in tRNA = pseudouridine(38/39/40) in tRNA. Its function is as follows. Formation of pseudouridine at positions 38, 39 and 40 in the anticodon stem and loop of transfer RNAs. The protein is tRNA pseudouridine synthase A of Bartonella quintana (strain Toulouse) (Rochalimaea quintana).